We begin with the raw amino-acid sequence, 295 residues long: Indole-3-glycerol phosphate synthase (295 aa).

Belongs to the TrpC family.

It catalyses the reaction 1-(2-carboxyphenylamino)-1-deoxy-D-ribulose 5-phosphate + H(+) = (1S,2R)-1-C-(indol-3-yl)glycerol 3-phosphate + CO2 + H2O. The protein operates within amino-acid biosynthesis; L-tryptophan biosynthesis; L-tryptophan from chorismate: step 4/5. This is Indole-3-glycerol phosphate synthase from Synechococcus sp. (strain ATCC 27144 / PCC 6301 / SAUG 1402/1) (Anacystis nidulans).